Reading from the N-terminus, the 71-residue chain is Biotinylated protein TB7.3 homolog (71 aa).

The Biotinyl-binding domain occupies Ala2–Ser71. At Lys37 the chain carries N6-biotinyllysine.

This is Biotinylated protein TB7.3 homolog from Mycobacterium leprae (strain TN).